We begin with the raw amino-acid sequence, 251 residues long: 1-(5-phosphoribosyl)-5-[(5-phosphoribosylamino)methylideneamino] imidazole-4-carboxamide isomerase (251 aa).

The Proton acceptor role is filled by aspartate 8. Residue aspartate 131 is the Proton donor of the active site.

The protein belongs to the HisA/HisF family.

It is found in the cytoplasm. It carries out the reaction 1-(5-phospho-beta-D-ribosyl)-5-[(5-phospho-beta-D-ribosylamino)methylideneamino]imidazole-4-carboxamide = 5-[(5-phospho-1-deoxy-D-ribulos-1-ylimino)methylamino]-1-(5-phospho-beta-D-ribosyl)imidazole-4-carboxamide. Its pathway is amino-acid biosynthesis; L-histidine biosynthesis; L-histidine from 5-phospho-alpha-D-ribose 1-diphosphate: step 4/9. The polypeptide is 1-(5-phosphoribosyl)-5-[(5-phosphoribosylamino)methylideneamino] imidazole-4-carboxamide isomerase (Burkholderia lata (strain ATCC 17760 / DSM 23089 / LMG 22485 / NCIMB 9086 / R18194 / 383)).